A 434-amino-acid polypeptide reads, in one-letter code: F-box/kelch-repeat protein At1g55270 (434 aa).

The 47-residue stretch at 76 to 122 folds into the F-box domain; sequence PPLLPGLPDDLAVACLIRVPRAEHRKLRLVCKRWYRLASGNFFYSQR. Kelch repeat units follow at residues 129–178, 180–227, 229–276, 278–321, and 325–371; these read EEWV…VLSG, HLYL…VINN, LYVA…VYDK, WFLK…SLNG, and GLDC…LHNK.

This Arabidopsis thaliana (Mouse-ear cress) protein is F-box/kelch-repeat protein At1g55270.